A 425-amino-acid chain; its full sequence is MIDIKLLRKEPEIFYNALEKRAMDKEIIDRILVLDREWRSILAEVNNLKAKRNELSKMVAKLKAEKKDIEAEELIKESKGIGEKIKKLDERQKRLEEEMKNLALEIPNIPHESVPVGKDETENVEVRKWGTPRKFDFEPKAHWDLGPELGLIDFERAAKLSGARFTVMYGLLAKLERALIQFMLDVHTKEHGYTEVWVPHLVRREVMIWTGKLPKFEDESYNTKKDDLFLIPTAEVPITALHAEEILKEKELPKKYVSYTSCYRREAGSYGKDVRGMIRQHQFDKVELVWFTKEEESFNALEQLTRDAERILQLLELPYRVVNLCTGDLGFASAKTYDIEVWLPSYNDYKEVSSCSNITDFQARRANIKYRGSDNKTHFVHTLNGSGLAIGRTLVAIMENYQNEDGTITIPKVLVPYMGVEKISI.

Residue 233–235 (TAE) coordinates L-serine. 264–266 (RRE) is a binding site for ATP. E287 is a binding site for L-serine. 351–354 (EVSS) contacts ATP. S386 contributes to the L-serine binding site.

This sequence belongs to the class-II aminoacyl-tRNA synthetase family. Type-1 seryl-tRNA synthetase subfamily. As to quaternary structure, homodimer. The tRNA molecule binds across the dimer.

It localises to the cytoplasm. It catalyses the reaction tRNA(Ser) + L-serine + ATP = L-seryl-tRNA(Ser) + AMP + diphosphate + H(+). The enzyme catalyses tRNA(Sec) + L-serine + ATP = L-seryl-tRNA(Sec) + AMP + diphosphate + H(+). The protein operates within aminoacyl-tRNA biosynthesis; selenocysteinyl-tRNA(Sec) biosynthesis; L-seryl-tRNA(Sec) from L-serine and tRNA(Sec): step 1/1. Functionally, catalyzes the attachment of serine to tRNA(Ser). Is also able to aminoacylate tRNA(Sec) with serine, to form the misacylated tRNA L-seryl-tRNA(Sec), which will be further converted into selenocysteinyl-tRNA(Sec). The protein is Serine--tRNA ligase of Thermosipho melanesiensis (strain DSM 12029 / CIP 104789 / BI429).